The following is a 207-amino-acid chain: MKLLHLDSSPRGERSISRSLTQQFVSLWKQMHLDVPVIYRDLGRYPVPAIDEAWIAAAFCPPAQLTPELQSALMISDELIAELLAANLYIFGIPMYNYSVPASFKAYIDQIVRVRRTFVVSADGYEGLLKDKKVLVITTRGGSYAGEPLDFQEPYLRAVFGFIGITDVTFIHAENLAIGSEERQLAIATAHEAIQQVVKTWQSSTCI.

Residues Ser-9, 15–17 (SIS), and 139–142 (TRGG) each bind FMN.

Belongs to the azoreductase type 1 family. Homodimer. The cofactor is FMN.

The enzyme catalyses 2 a quinone + NADH + H(+) = 2 a 1,4-benzosemiquinone + NAD(+). The catalysed reaction is N,N-dimethyl-1,4-phenylenediamine + anthranilate + 2 NAD(+) = 2-(4-dimethylaminophenyl)diazenylbenzoate + 2 NADH + 2 H(+). Functionally, quinone reductase that provides resistance to thiol-specific stress caused by electrophilic quinones. Its function is as follows. Also exhibits azoreductase activity. Catalyzes the reductive cleavage of the azo bond in aromatic azo compounds to the corresponding amines. This chain is FMN-dependent NADH:quinone oxidoreductase 1, found in Trichormus variabilis (strain ATCC 29413 / PCC 7937) (Anabaena variabilis).